Consider the following 98-residue polypeptide: NADH-ubiquinone oxidoreductase chain 4L (98 aa).

Helical transmembrane passes span 1–21 (MTSI…GVLI), 28–48 (STLL…ALLI), and 59–79 (APLI…ALLV).

This sequence belongs to the complex I subunit 4L family. Core subunit of respiratory chain NADH dehydrogenase (Complex I) which is composed of 45 different subunits.

Its subcellular location is the mitochondrion inner membrane. It carries out the reaction a ubiquinone + NADH + 5 H(+)(in) = a ubiquinol + NAD(+) + 4 H(+)(out). In terms of biological role, core subunit of the mitochondrial membrane respiratory chain NADH dehydrogenase (Complex I) which catalyzes electron transfer from NADH through the respiratory chain, using ubiquinone as an electron acceptor. Part of the enzyme membrane arm which is embedded in the lipid bilayer and involved in proton translocation. This chain is NADH-ubiquinone oxidoreductase chain 4L (MT-ND4L), found in Vombatus ursinus (Common wombat).